We begin with the raw amino-acid sequence, 317 residues long: Flagellar hook-associated protein 3 (317 aa).

The protein belongs to the bacterial flagellin family.

It is found in the secreted. The protein localises to the bacterial flagellum. This chain is Flagellar hook-associated protein 3 (flgL), found in Escherichia coli (strain K12).